A 369-amino-acid chain; its full sequence is Peridinin-chlorophyll a-binding protein 2, chloroplastic (369 aa).

A chloroplast-targeting transit peptide spans 1 to 56 (MVRSGKKAVVLATVAFCATSVVQKTCGFVPSPLRQRAAAAGAAASVATMFAPAAFA). 2 consecutive repeat copies span residues 57–219 (DEIG…VPSG) and 220–369 (DTIG…AAQR).

As to quaternary structure, homotrimer.

It localises to the plastid. The protein localises to the chloroplast. Its function is as follows. Water-soluble antenna for capture of solar energy in the blue-green range. Peridinin is an asymmetric carotenoid. The chain is Peridinin-chlorophyll a-binding protein 2, chloroplastic from Amphidinium carterae (Dinoflagellate).